The following is a 158-amino-acid chain: SsrA-binding protein (158 aa).

The tract at residues 133 to 158 (QLHDKRETEKKRDWNKEKGRLLRDKH) is disordered.

The protein belongs to the SmpB family.

Its subcellular location is the cytoplasm. Required for rescue of stalled ribosomes mediated by trans-translation. Binds to transfer-messenger RNA (tmRNA), required for stable association of tmRNA with ribosomes. tmRNA and SmpB together mimic tRNA shape, replacing the anticodon stem-loop with SmpB. tmRNA is encoded by the ssrA gene; the 2 termini fold to resemble tRNA(Ala) and it encodes a 'tag peptide', a short internal open reading frame. During trans-translation Ala-aminoacylated tmRNA acts like a tRNA, entering the A-site of stalled ribosomes, displacing the stalled mRNA. The ribosome then switches to translate the ORF on the tmRNA; the nascent peptide is terminated with the 'tag peptide' encoded by the tmRNA and targeted for degradation. The ribosome is freed to recommence translation, which seems to be the essential function of trans-translation. The chain is SsrA-binding protein from Beijerinckia indica subsp. indica (strain ATCC 9039 / DSM 1715 / NCIMB 8712).